The primary structure comprises 147 residues: Glucosamine 6-phosphate N-acetyltransferase (147 aa).

Positions 7 to 147 constitute an N-acetyltransferase domain; the sequence is LELRVLEESD…AHERQMRLDL (141 aa). D-glucosamine 6-phosphate contacts are provided by residues Thr-28 and 86 to 88; that span reads EDV. Acetyl-CoA contacts are provided by residues 88–90 and 96–101; these read VVV and GAGLGK. D-glucosamine 6-phosphate is bound by residues 117–118 and Asp-122; that span reads YK. 131 to 133 contacts acetyl-CoA; sequence YEK.

It belongs to the acetyltransferase family. GNA1 subfamily. In terms of assembly, homodimer. Post-translationally, contains poly-N-acetyllactosamines.

The protein resides in the glycosome. It carries out the reaction D-glucosamine 6-phosphate + acetyl-CoA = N-acetyl-D-glucosamine 6-phosphate + CoA + H(+). It participates in nucleotide-sugar biosynthesis; UDP-N-acetyl-alpha-D-glucosamine biosynthesis; N-acetyl-alpha-D-glucosamine 1-phosphate from alpha-D-glucosamine 6-phosphate (route I): step 1/2. Functionally, involved in the biosynthesis of UDP-N-acetyl-alpha-D-glucosamine. Catalyzes the formation of N-acetyl-D-glucosamine 6-phosphate from acetyl-coenzyme A (acetyl-CoA) and D-glucosamine 6-phosphate. This is Glucosamine 6-phosphate N-acetyltransferase from Trypanosoma brucei brucei.